A 345-amino-acid polypeptide reads, in one-letter code: Protein RecA (345 aa).

67 to 74 (GPESSGKT) is a binding site for ATP.

This sequence belongs to the RecA family.

Its subcellular location is the cytoplasm. In terms of biological role, can catalyze the hydrolysis of ATP in the presence of single-stranded DNA, the ATP-dependent uptake of single-stranded DNA by duplex DNA, and the ATP-dependent hybridization of homologous single-stranded DNAs. It interacts with LexA causing its activation and leading to its autocatalytic cleavage. The polypeptide is Protein RecA (Acidothermus cellulolyticus (strain ATCC 43068 / DSM 8971 / 11B)).